Consider the following 371-residue polypeptide: Leucine-rich repeat-containing protein 2 (371 aa).

LRR repeat units lie at residues 122–143, 145–166, 168–189, 191–214, 215–235, 238–260, 261–283, 284–305, and 308–329; these read HLRE…IQLF, AMRI…IGCL, NLKE…LGDC, NLER…SNLK, QVTF…CVLR, NLQW…DRLE, ELQS…LNLK, KLTL…LCDS, and PLKF…DGNE.

This is Leucine-rich repeat-containing protein 2 (LRRC2) from Homo sapiens (Human).